Here is a 327-residue protein sequence, read N- to C-terminus: Malate dehydrogenase (327 aa).

An NAD(+)-binding site is contributed by 12-18; that stretch reads GAAGQIG. R93 and R99 together coordinate substrate. NAD(+) contacts are provided by residues N106, Q113, and 130–132; that span reads VGN. N132 and R163 together coordinate substrate. H188 (proton acceptor) is an active-site residue.

This sequence belongs to the LDH/MDH superfamily. MDH type 2 family.

The catalysed reaction is (S)-malate + NAD(+) = oxaloacetate + NADH + H(+). Functionally, catalyzes the reversible oxidation of malate to oxaloacetate. In Cupriavidus necator (strain ATCC 17699 / DSM 428 / KCTC 22496 / NCIMB 10442 / H16 / Stanier 337) (Ralstonia eutropha), this protein is Malate dehydrogenase.